We begin with the raw amino-acid sequence, 265 residues long: Bidirectional sugar transporter SWEET7b (265 aa).

Topologically, residues 1–9 (MVSPDLIRN) are extracellular. Residues 10-30 (MVGIVGNIISFGLFLSPVPTF) traverse the membrane as a helical segment. A MtN3/slv 1 domain is found at 10 to 97 (MVGIVGNIIS…TIFFLFSDKK (88 aa)). Residues 31 to 45 (YRIIKNKDVQDFKAD) are Cytoplasmic-facing. The helical transmembrane segment at 46-66 (PYLATLLNCMLWVFYGLPIVH) threads the bilayer. The Extracellular portion of the chain corresponds to 67–69 (PNS). Residues 70 to 90 (ILVVTINGIGLVIEAVYLTIF) traverse the membrane as a helical segment. At 91-101 (FLFSDKKNKKK) the chain is on the cytoplasmic side. Residues 102–122 (MGVVLATEALFMAAVVLGVLL) traverse the membrane as a helical segment. The Extracellular portion of the chain corresponds to 123–131 (GAHTHQRRS). Residues 132-152 (LIVGILCVIFGTIMYSSPLTI) traverse the membrane as a helical segment. Residues 133–215 (IVGILCVIFG…QLILYAIYYR (83 aa)) enclose the MtN3/slv 2 domain. Residues 153–165 (MSQVVKTKSVEYM) are Cytoplasmic-facing. A helical membrane pass occupies residues 166-186 (PLLLSVVSFLNGLCWTSYALI). At 187–189 (RLD) the chain is on the extracellular side. Residues 190 to 210 (IFITIPNGLGVLFALMQLILY) traverse the membrane as a helical segment. Residues 211–265 (AIYYRTIPKKQDKNLELPTVAPVAKDTSIVTPVSKDDDVDGGNASHVTINITIEL) lie on the Cytoplasmic side of the membrane.

Belongs to the SWEET sugar transporter family. As to quaternary structure, forms homooligomers and/or heterooligomers.

Its subcellular location is the cell membrane. Functionally, mediates both low-affinity uptake and efflux of sugar across the plasma membrane. This is Bidirectional sugar transporter SWEET7b (SWEET7B) from Oryza sativa subsp. japonica (Rice).